The following is a 613-amino-acid chain: Phostensin (613 aa).

Basic and acidic residues predominate over residues 15-33 (RRQEEASVRGREKAERERL). Disordered regions lie at residues 15 to 231 (RRQE…SAYQ) and 266 to 505 (GEER…GKKR). 5 positions are modified to phosphoserine: Ser54, Ser125, Ser133, Ser175, and Ser195. Composition is skewed to basic and acidic residues over residues 104 to 154 (RSEE…ERRL) and 167 to 191 (LEARDWRQSPGEVGDRSSRLSEPWK). At Thr199 the chain carries Phosphothreonine. The segment covering 199-221 (TPERSLRLAESREQSPRRKEVES) has biased composition (basic and acidic residues). Position 224 is a phosphoserine (Ser224). Over residues 266 to 282 (GEERQGYSEKCGRKEEW) the composition is skewed to basic and acidic residues. The span at 301–310 (REAQGSSSTG) shows a compositional bias: polar residues. 3 stretches are compositionally biased toward basic and acidic residues: residues 314–327 (AEQRPVEDGERGMK), 340–350 (KAREWTPRDIE), and 357–367 (EPSESAEKRLE). A phosphoserine mark is found at Ser368 and Ser432. Pro residues predominate over residues 424–446 (QPPPPAPLSPPPPAPTAPQPPGD). At Lys457 the chain carries N6-acetyllysine. Residues 476 to 499 (PRRSVPPTTPATPTSPATADAAVP) are compositionally biased toward low complexity. Residues Ser490 and Ser530 each carry the phosphoserine modification. The segment at 552-594 (QYPSESSVLEELGPEPEVPSAPNPPAAQPDDEEDEEELLLLQP) is disordered. The span at 567–578 (PEVPSAPNPPAA) shows a compositional bias: pro residues. Acidic residues predominate over residues 580 to 589 (PDDEEDEEEL).

In terms of assembly, interacts with Protein phosphatase 1 (PP1).

The protein resides in the cytoplasm. Its subcellular location is the cytoskeleton. May target protein phosphatase 1 to F-actin cytoskeleton. The chain is Phostensin (PPP1R18) from Macaca mulatta (Rhesus macaque).